The primary structure comprises 1515 residues: DNA topoisomerase 2-binding protein 1 (1515 aa).

BRCT domains follow at residues 101–189 (VYNM…KYTD) and 195–284 (FKCP…IYKA). Position 298 is a phosphothreonine (Thr-298). 3 consecutive BRCT domains span residues 353-443 (APED…SYIH), 551-636 (REEG…SNPL), and 644-741 (SGVT…HFLV). Positions 759 to 893 (VSSNPDLPAH…TDSHSASPQL (135 aa)) are interaction with CIP2A. A Phosphothreonine modification is found at Thr-782. A disordered region spans residues 799-826 (SQQRGQDPTFPPVRQPLTKEPSLHLDTP). Thr-851 is modified (phosphothreonine). Phosphoserine is present on residues Ser-862, Ser-863, Ser-866, Ser-888, and Ser-890. The span at 880-891 (SSRNTDSHSASP) shows a compositional bias: polar residues. The tract at residues 880–901 (SSRNTDSHSASPQLKGAHLEEE) is disordered. Residues 902-993 (ETRKPLDSVV…KHLPESLYPH (92 aa)) form the BRCT 6 domain. The tract at residues 1020–1055 (VSASKDDGPDHLSVEGNETNTMGTNDKESPLLNGSG) is disordered. Positions 1023–1032 (SKDDGPDHLS) are enriched in basic and acidic residues. Residue Thr-1064 is modified to Phosphothreonine. Residues 1097-1116 (SRSSCNSASSTPDSARSVRS) show a composition bias toward low complexity. Disordered stretches follow at residues 1097–1119 (SRSS…SGRS), 1203–1255 (VTQA…TQEE), and 1491–1515 (KKGG…PRVH). The span at 1217 to 1229 (PPVAERPLIPEPQ) shows a compositional bias: pro residues. Residues 1255 to 1347 (ETHRKVKKQY…RFVQEEDYEW (93 aa)) form the BRCT 7 domain. Positions 1510 to 1513 (KRPR) match the Nuclear localization signal motif.

Belongs to the TOPBP1 family. In terms of assembly, interacts (via BRCT domains 1 and 2) with (phosphorylated) MDC1; promoting TOPBP1 recruitment to DNA damage sites during mitosis. Interacts (via BRCT domains 7 and 8) with (autophosphorylated) ATR; promoting activation of ATR. Interacts (via BRCT domains 7 and 8) with (phosphorylated) POLQ; specifically binds POLQ phosphorylated by PLK1, promoting POLQ recruitment to DNA damage sites. Interacts (via BRCT domains 1 and 2) with (phosphorylated) RAD9A. Interacts (via BRCT domain 2) with (phosphorylated) TP53BP1. Interacts (via BRCT domain 2) with (phosphorylated) HTATSF1. Interacts (via BRCT domains 7 and 8) with (phosphorylated) RAD51; promoting RAD51 recruitment to damaged chromatin. Interacts with CIP2A; forming the CIP2A-TOPBP1 complex. Interacts with POLE. Interacts with UBR5. Interacts with E2F1. Interacts with PML. Interacts with SMARCA2. Interacts with SMARCA4. Interacts with RHNO1. May interact with TOP2B. Interacts with TICRR. Interacts with HELB. Post-translationally, phosphorylated on serine and threonine residues in response to X-ray irradiation. Ubiquitinated and degraded by the proteasome. X-ray irradiation reduces ubiquitination. Deubiquitinated by USP13; leading to TOPBP1 stabilizion and activation of the ATR-TOPBP1 axis pathway. As to expression, highly expressed in testis.

The protein localises to the nucleus. Its subcellular location is the chromosome. It localises to the cytoplasm. The protein resides in the cytoskeleton. It is found in the microtubule organizing center. The protein localises to the centrosome. Its subcellular location is the spindle pole. In terms of biological role, scaffold protein that acts as a key protein-protein adapter in DNA replication and DNA repair. Composed of multiple BRCT domains, which specifically recognize and bind phosphorylated proteins, bringing proteins together into functional combinations. Required for DNA replication initiation but not for the formation of pre-replicative complexes or the elongation stages. Necessary for the loading of replication factors onto chromatin, including GMNC, CDC45, DNA polymerases and components of the GINS complex. Plays a central role in DNA repair by bridging proteins and promoting recruitment of proteins to DNA damage sites. Involved in double-strand break (DSB) repair via homologous recombination in S-phase by promoting the exchange between the DNA replication factor A (RPA) complex and RAD51. Mechanistically, TOPBP1 is recruited to DNA damage sites in S-phase via interaction with phosphorylated HTATSF1, and promotes the loading of RAD51, thereby facilitating RAD51 nucleofilaments formation and RPA displacement, followed by homologous recombination. Involved in microhomology-mediated end-joining (MMEJ) DNA repair by promoting recruitment of polymerase theta (POLQ) to DNA damage sites during mitosis. MMEJ is an alternative non-homologous end-joining (NHEJ) machinery that takes place during mitosis to repair DSBs in DNA that originate in S-phase. Recognizes and binds POLQ phosphorylated by PLK1, enabling its recruitment to DSBs for subsequent repair. Involved in G1 DNA damage checkpoint by acting as a molecular adapter that couples TP53BP1 and the 9-1-1 complex. In response to DNA damage, triggers the recruitment of checkpoint signaling proteins on chromatin, which activate the CHEK1 signaling pathway and block S-phase progression. Acts as an activator of the kinase activity of ATR. Also required for chromosomal stability when DSBs occur during mitosis by forming filamentous assemblies that bridge MDC1 and tether broken chromosomes during mitosis. Together with CIP2A, plays an essential role in the response to genome instability generated by the presence of acentric chromosome fragments derived from shattered chromosomes within micronuclei. Micronuclei, which are frequently found in cancer cells, consist of chromatin surrounded by their own nuclear membrane: following breakdown of the micronuclear envelope, a process associated with chromothripsis, the CIP2A-TOPBP1 complex tethers chromosome fragments during mitosis to ensure clustered segregation of the fragments to a single daughter cell nucleus, facilitating re-ligation with limited chromosome scattering and loss. Recruits the SWI/SNF chromatin remodeling complex to E2F1-responsive promoters, thereby down-regulating E2F1 activity and inhibiting E2F1-dependent apoptosis during G1/S transition and after DNA damage. This is DNA topoisomerase 2-binding protein 1 from Mus musculus (Mouse).